The chain runs to 82 residues: EMBRYO SURROUNDING FACTOR 1-like protein 10 (82 aa).

A signal peptide spans Met-1–Phe-22. Intrachain disulfides connect Cys-39-Cys-55, Cys-44-Cys-74, Cys-53-Cys-70, and Cys-56-Cys-63.

The protein belongs to the MEG family. In terms of tissue distribution, expressed in stems, leaves and flowers.

This is EMBRYO SURROUNDING FACTOR 1-like protein 10 (ESFL10) from Arabidopsis thaliana (Mouse-ear cress).